The chain runs to 952 residues: MDRIVIRGAREHNLKNISLELPRGKFIVITGVSGSGKSTLAFDTIYAEGQRRYVESLSSYARQFLGVMDKPEVESIEGLSPAISIDQKTTSHNPRSTVGTVTEIHDYLRLLFARVGQAFCPECGRPIEKQSASEITDRLLKRPPGTRAILMAPLVRGRKGEYRKLFQQLLKEGYARVRVDGVIYLLEEAQGLSLEKYEKHDIDLVIDRVVLKEEERPRIAEAVELALLRGEGLLRVLYPDTGEEELFSEKFACPEHGSVLEELEPRIFSFNSPYGACPACSGLGYRQEFDPELVVNPELSLAEGAILPWSRGRDTGRSYLWDRLRALAEHLGFDLKTPFKDLPEEAKRAVLYGLPEPFEVVFRRGGKETFRVEVRYEGVIPWLEKRYQESDSEGVREALEGFMSLRPCPACGGTRYKREVLSVKVAGRNIAEVSALPVREALAFFQGLEKTLPPFQAQIARPILREIVERLGFLVDVGLDYLTLDRAANTLSGGEAQRIRLATQVGSGLTGVLYVLDEPSIGLHPRDNQRLIRTLKRLRDLGNTLIVVEHDEETMRAADWIVDMGPGAGIHGGEVVAQGTLEDILKSPQSLTGAYLRGEKRIPVPKERRKGNGKWLVLKGARAHNLKNVTLRIPLGRFVAITGPSGSGKSTLVHDVLYAALAQRLMRAKTTPGPYEALEGVEHLDKVIEIDQSPIGRTPRSNPATYTGVFDEIRDLFAKTPEARKRGYGPGRFSFNVKGGRCEACGGDGTVKIEMLFLPDLYVPCEVCKGKRYNKETLEVKLRGKSIADVLDMTVEEALDFFQNVPSIARKLQLMVDVGLGYMKLGQPSPTLSGGEAQRIKLATELGRKATGRTLYILDEPTTGLHFDDVAKLLSVLHRLVDAGNTVVVIEHNLDVVKTADWVIDLGPEGGDRGGEIVAEGTPEEVALTGSPTGAFLARIPEIAARIGVAAD.

31–38 (GVSGSGKS) is a binding site for ATP. The C4-type zinc finger occupies 253–280 (CPEHGSVLEELEPRIFSFNSPYGACPAC). ABC transporter domains follow at residues 309–591 (WSRG…PQSL) and 611–938 (GNGK…AFLA). An ATP-binding site is contributed by 643–650 (GPSGSGKS). The segment at 742–768 (CEACGGDGTVKIEMLFLPDLYVPCEVC) adopts a C4-type zinc-finger fold.

It belongs to the ABC transporter superfamily. UvrA family. As to quaternary structure, forms a heterotetramer with UvrB during the search for lesions.

Its subcellular location is the cytoplasm. Functionally, the UvrABC repair system catalyzes the recognition and processing of DNA lesions. UvrA is an ATPase and a DNA-binding protein. A damage recognition complex composed of 2 UvrA and 2 UvrB subunits scans DNA for abnormalities. When the presence of a lesion has been verified by UvrB, the UvrA molecules dissociate. This chain is UvrABC system protein A, found in Thermus thermophilus (strain ATCC 27634 / DSM 579 / HB8).